Reading from the N-terminus, the 2038-residue chain is MELAHSLLLNEEASNQLGAVQKAEFIFEWLRYLEKLLLATNREDVREKQKTLVGQLLSLLNSSPGPPTRKLLAQDLAILYSVGDTVSVYETIDKCNDLIRSKDDSPSYLPTKLAAVVCLGSLYKKLGRILANGFTDTVVNILKAMKSAESQGRYEIMLSLQSILTGLGAAAAPCHRDVYKAARSCLTDRSMAVRCAAAKCLLELQNEAIFMWSTDVDSVATLCFKSFEGSNYDVRISVSKLLGTVLAKAVTAKHPGAGSKQSARRVSLEEVLELLGAGFLRGSSGFLRASGDMLKGNSSVSRDVRVGVTQAYVVFVSTLGGAWLEKNLAAFLSHILSLVSQSNPKATQTQIDAVCCRRCVSFILRATLGGLLGEKAQIAAAKEICQAVWRLKKVMDAALSDGNVETRLSSTDVAASQHVLVCALQELGNLIHNLGTTAAPLLQDSSTGLLDSVISVVLHPSISVRLAAAWCLHCIAVALPSYLTPLLDRCLERLAILKSSPEAVTGFSSAVAALLGSVTHCPLGIPHGKGKIIMTIAEDLLCSAAQNSRLSLQRTQAGWLLVAALMTLGPAVVSHHLTRVLLLWKCVFPASPRDLETEKSRGDSFTWQVTLEGRAGALCAVKSFISHCGDLLTEEVIQRLLPPLPCAVDLLTQLSSILKTYGSSLKTPSIVYRQRLYELLILLPPETYKGNLCVILKELAAELTAPDTQAAASTCLLPALCHPDDLLILSPLLQETDHRFIEEQLLLGNGVACGSLEYDPYSIYEKDVEGDSVPKPLPPALSVISSASKLFGVVCATVDEAQRVLILEQLLNSIKHTKGARQQTVQLHVVSAISNLLKYVAGSKQSLGPEVRRLVLTLVLGALESPTPLLRCAASEAWARLAQVADDGAFTAGLAQLSFDKLKSARDVVTRTGHSLALGSLHRYLGGIGPQHLSSCIGVLYTLSQDSTSPDVQTWALHSLSLTIDSAGALYHVHVESTLSLIVMLLLNVPPTHAQVHQSLGRCLNALITTLGPELQGSNTSVSALRTSCLLGCAVMQDHPGCLVQAQAISCLQQLHMFAPRHVNLSSLVSCLCVNLCSPYLLLRRAVLACLRQLVQREAAEVSEHAIMLARDGRDAAADANLREVGLEGALLALLDRETDESLCQDIRETLHHMLTSMAVGKLTLWLKLCKDVLAASADFTAVTCVDTMQEEEGDRGDDASVLTRGDDKPHPFSNPRWATRVFAADCVCRIINQCENANRAHFDIALAQEMKKRDSRNDFLVLHLADLIRMAFMAATDHSDQLRLSGLDTLLVVIRRFADIAEPEFPGHVILEQYQANVGAALRPAFTSETPPDITAKACQVCSAWIASGVVSDLSDLRRVHQLLVSSLTKIQAGKEALSQLYNESASTMEILAVLRAWAEVYIIAVQRHKNHKQALKTTVNSEDSMRNGSSSAAGLLDLVCTDLATLSKLWLAALQDFALLTLPAEFASQLPTEGGAFYTAETSKSAKLHYHDSWALILHAAALWLTSTGFADPDEGGANLSRPVTPTSMCQGSSSSGAAVKSPEDVYTDRFHLILGISVEFLCSLRSDASLESIMACLRALQALLDVPWPRWRIGSDQDLGIELLNVLHRVILTRESPAIQLASLEVVRQIICAAQEHVKEKRRSAEVDDGASEKETLPEFGEGKDTGGLVPGKSLVFATLELCVCILVRQLPELNPKLAGSPGGKASKPKTLLEEGSRLVAAALAILAELPAVCSPEGSISILPTVLYLTIGVLRETAVKLPGGQLSCTVTASLQTLKGILTSPMARAEKSHEAWTSLLQSALATVLDCWSPVDGAQEPDEVSLLTAVTVFILSTSPEVTTVPCLQNRCIEKFKAALESKDSVVQMKTCQLLHSIFQYPKPAVSYPYIYSLASSIVEKLQDIARRKPEDATELQLCQEGIKLLEALVAIAEEEHRAQLVACLLPILISFLLDENALGSATSVTRSLHDFALHSLMQIGPRYSSVFKRVMASSPALKARLEAAVKGNQESVRVDPPSKHAKNLARNSSIQLKTNFL.

2 HEAT repeats span residues 850–887 (EVRR…VADD) and 1082–1119 (LLRR…AAAD). Residues 1646 to 1668 (RSAEVDDGASEKETLPEFGEGKD) form a disordered region. The residue at position 1647 (Ser1647) is a Phosphoserine.

Belongs to the HEATR5 family.

This is HEAT repeat-containing protein 5A (Heatr5a) from Mus musculus (Mouse).